The following is a 55-amino-acid chain: Large ribosomal subunit protein bL33 (55 aa).

The protein belongs to the bacterial ribosomal protein bL33 family.

The polypeptide is Large ribosomal subunit protein bL33 (Dehalococcoides mccartyi (strain ATCC BAA-2100 / JCM 16839 / KCTC 5957 / BAV1)).